Here is a 1377-residue protein sequence, read N- to C-terminus: DNA-directed RNA polymerase subunit beta' (1377 aa).

4 residues coordinate Zn(2+): Cys70, Cys72, Cys85, and Cys88. The Mg(2+) site is built by Asp460, Asp462, and Asp464. Zn(2+)-binding residues include Cys808, Cys882, Cys889, and Cys892.

It belongs to the RNA polymerase beta' chain family. As to quaternary structure, the RNAP catalytic core consists of 2 alpha, 1 beta, 1 beta' and 1 omega subunit. When a sigma factor is associated with the core the holoenzyme is formed, which can initiate transcription. Mg(2+) is required as a cofactor. It depends on Zn(2+) as a cofactor.

The catalysed reaction is RNA(n) + a ribonucleoside 5'-triphosphate = RNA(n+1) + diphosphate. Functionally, DNA-dependent RNA polymerase catalyzes the transcription of DNA into RNA using the four ribonucleoside triphosphates as substrates. The polypeptide is DNA-directed RNA polymerase subunit beta' (Geotalea uraniireducens (strain Rf4) (Geobacter uraniireducens)).